The following is a 216-amino-acid chain: 3-keto-L-gulonate-6-phosphate decarboxylase UlaD (216 aa).

Residue Asp11 participates in substrate binding. 2 residues coordinate Mg(2+): Glu33 and Asp62. Arg192 serves as a coordination point for substrate.

This sequence belongs to the HPS/KGPDC family. KGPDC subfamily. Homodimer. It depends on Mg(2+) as a cofactor.

The enzyme catalyses 3-dehydro-L-gulonate 6-phosphate + H(+) = L-xylulose 5-phosphate + CO2. It participates in cofactor degradation; L-ascorbate degradation; D-xylulose 5-phosphate from L-ascorbate: step 2/4. Catalyzes the decarboxylation of 3-keto-L-gulonate-6-P into L-xylulose-5-P. Is involved in the anaerobic L-ascorbate utilization. In Escherichia coli O17:K52:H18 (strain UMN026 / ExPEC), this protein is 3-keto-L-gulonate-6-phosphate decarboxylase UlaD.